The chain runs to 564 residues: Septin-9 (564 aa).

An N-acetylmethionine modification is found at Met-1. At Ser-12 the chain carries Phosphoserine. Residues Thr-24 and Thr-31 each carry the phosphothreonine modification. Disordered stretches follow at residues 38 to 165 (VASS…PVTD) and 178 to 224 (PAEA…DSEV). The residue at position 44 (Lys-44) is an N6-acetyllysine. Residues Ser-64, Ser-67, and Ser-71 each carry the phosphoserine modification. The span at 95-109 (DISSKQVESTASTPG) shows a compositional bias: polar residues. Basic and acidic residues predominate over residues 116–134 (KRAEVLGHKTPEPVPRRTE). Phosphothreonine is present on Thr-125. The segment covering 190–203 (TLENSEAPMSQLQS) has biased composition (polar residues). Phosphotyrosine is present on Tyr-258. One can recognise a Septin-type G domain in the interval 275 to 546 (QGFEFNIMVV…EAYRVKRLNE (272 aa)). Positions 285-292 (GQSGLGKS) are G1 motif. GTP is bound at residue 285–292 (GQSGLGKS). Phosphoserine occurs at positions 307 and 312. GTP-binding positions include Thr-319, Gly-345, 425-433 (KADTLTLEE), Gly-480, and Arg-495. The tract at residues 342–345 (DTPG) is G3 motif. Residues 424–427 (AKAD) are G4 motif.

The protein belongs to the TRAFAC class TrmE-Era-EngA-EngB-Septin-like GTPase superfamily. Septin GTPase family. Septins polymerize into heterooligomeric protein complexes that form filaments, and associate with cellular membranes, actin filaments, and microtubules. GTPase activity is required for filament formation. Interacts with SEPTIN2, SEPTIN6, SEPTIN7, SEPTIN11 and SEPTIN14. Interacts with RTKN and ARHGEF18. As to expression, expressed in the brain, mainly in the perikarya and processes of astrocytes in the cerebellum, dentate gyrus and corpus callosum (at protein level). In the sciatic nerve, highly expressed in Schwann cells (at protein level). Isoforms are differentially expressed in testes, kidney, liver, heart, spleen and brain. Undetectable in skeletal muscle.

Its subcellular location is the cytoplasm. The protein localises to the cytoskeleton. In terms of biological role, filament-forming cytoskeletal GTPase. May play a role in cytokinesis (Potential). This Rattus norvegicus (Rat) protein is Septin-9.